Here is a 418-residue protein sequence, read N- to C-terminus: uncharacterized protein (418 aa).

A run of 10 helical transmembrane segments spans residues 51–71 (FVMAVGGIAAIVAQTPIGALV), 79–99 (ALVVAGAVLVTAAAVAMPLFA), 110–130 (VTGIASSVFAPALAAITLGAV), 163–183 (FFGPVVVFWVLAGMALISVLA), 224–244 (VIFGAAVVAFHFANAAMLPLV), 258–278 (ALMSSCIVAAQVVMVPVAYVV), 289–309 (PIFLVGFAVLTARGFLYTLSD), 315–335 (VGVQLLDGIGAGIFGALFPLV), 356–376 (ATGIGAALSNLVAGWIVVVAG), and 379–399 (AAFMSLGALAGAGFLLYLVAM).

Belongs to the major facilitator superfamily.

It localises to the cell membrane. This is an uncharacterized protein from Mycobacterium tuberculosis (strain CDC 1551 / Oshkosh).